The chain runs to 624 residues: Histone-lysine N-methyltransferase, H3 lysine-9 specific SUVH4 (624 aa).

Disordered stretches follow at residues 1–25 (MAGK…VQKV) and 54–86 (DDTE…KGKQ). A YDG domain is found at 149-302 (GDLPGIDVGH…FTVYKYRLKR (154 aa)). Residues 381 to 443 (TGCNCRGSCT…KCVNRTSQKR (63 aa)) enclose the Pre-SET domain. The Zn(2+) site is built by Cys383, Cys385, Cys389, Cys395, Cys397, Cys425, Cys429, Cys431, and Cys435. Positions 446–594 (FNLEVFRSAK…PMQELTYDYG (149 aa)) constitute an SET domain. S-adenosyl-L-methionine-binding positions include 456 to 458 (KGW), Tyr493, Arg548, and 551 to 552 (NH). Residues Cys554, Cys612, Cys614, and Cys619 each coordinate Zn(2+). The region spanning 608-624 (KQLACYCGALNCRKRLY) is the Post-SET domain.

The protein belongs to the class V-like SAM-binding methyltransferase superfamily. Histone-lysine methyltransferase family. Suvar3-9 subfamily. As to quaternary structure, interacts with H3 histone. In terms of tissue distribution, expressed in leaves stems and flowers.

The protein resides in the nucleus. Its subcellular location is the chromosome. It localises to the centromere. It carries out the reaction N(6)-methyl-L-lysyl(9)-[histone H3] + S-adenosyl-L-methionine = N(6),N(6)-dimethyl-L-lysyl(9)-[histone H3] + S-adenosyl-L-homocysteine + H(+). It catalyses the reaction L-lysyl(9)-[histone H3] + S-adenosyl-L-methionine = N(6)-methyl-L-lysyl(9)-[histone H3] + S-adenosyl-L-homocysteine + H(+). Functionally, histone methyltransferase. Methylates 'Lys-9' of histone H3. H3 'Lys-9' methylation represents a specific tag for epigenetic transcriptional repression. The silencing mechanism via DNA CpNpG methylation requires the targeting of chromomethylase CMT3 to methylated histones, probably through an interaction with an HP1-like adapter. By its function, KYP is directly required for the maintenance of the DNA CpNpG and asymmetric methylation. Involved in the silencing of transposable elements. This is Histone-lysine N-methyltransferase, H3 lysine-9 specific SUVH4 (SUVH4) from Arabidopsis thaliana (Mouse-ear cress).